The primary structure comprises 89 residues: Small ribosomal subunit protein bS20 (89 aa).

The disordered stretch occupies residues 1 to 29 (MTLANIKSAKKRAVQSEKRRQHNASQRSM).

This sequence belongs to the bacterial ribosomal protein bS20 family.

Its function is as follows. Binds directly to 16S ribosomal RNA. The sequence is that of Small ribosomal subunit protein bS20 from Haemophilus influenzae (strain 86-028NP).